Reading from the N-terminus, the 669-residue chain is Protein ENTREP3 (669 aa).

3 helical membrane-spanning segments follow: residues 34–54 (LLTLGLAQVLLGILVITFSMV), 67–87 (SCPSWAGFSLAFSGLVGIVSW), and 91–111 (FTLVISFFSLLSVLCVMLSMA). N-linked (GlcNAc...) asparagine glycosylation occurs at asparagine 160. A helical transmembrane segment spans residues 174–194 (LFSVCGLTICAAIICTLSAIV). Residues serine 359 and serine 390 each carry the phosphoserine modification. 3 disordered regions span residues 387 to 420 (FEDSPLPRRPPRAARSYSCSAPEAPPPLGAPTAA), 445 to 502 (PRGG…TTSS), and 550 to 571 (RSAEKRRPVPTFQKVPLPSGPT). Residues 399-408 (AARSYSCSAP) show a composition bias toward low complexity. Position 494 is a phosphoserine (serine 494). Serine 575 carries the phosphoserine modification. The disordered stretch occupies residues 597-624 (RRSPDPTGTGAHGYKQVRRSPWGRPGRE).

This sequence belongs to the ENTREP family. As to quaternary structure, may interact with WWOX.

Its subcellular location is the membrane. The chain is Protein ENTREP3 from Mus musculus (Mouse).